The following is a 182-amino-acid chain: Spermatophorin SP23 (182 aa).

The signal sequence occupies residues 1–7 (MVASIAG). 3 disordered regions span residues 1-26 (MVAS…FQPY), 56-79 (FQTI…NSIE), and 104-136 (IVVN…PPTI). Pro residues predominate over residues 109-128 (APPPPPVIYQAPPPPPPPPI).

Spermatophore.

The protein resides in the secreted. Structural protein of a layer within the wall of the spermatophore produced probably by cell type 4 of the bean-shaped gland (BAG). Fixation in the spermatophore seems to require covalent cross-linking of spermatophorins. The chain is Spermatophorin SP23 (SP23) from Tenebrio molitor (Yellow mealworm beetle).